Reading from the N-terminus, the 152-residue chain is UPF0225 protein YchJ (152 aa).

This sequence belongs to the UPF0225 family.

This chain is UPF0225 protein YchJ, found in Escherichia coli O81 (strain ED1a).